The following is a 119-amino-acid chain: Small ribosomal subunit protein uS13m (119 aa).

Belongs to the universal ribosomal protein uS13 family. In terms of assembly, component of the mitochondrial small ribosomal subunit (mt-SSU). Mature N.crassa 74S mitochondrial ribosomes consist of a small (37S) and a large (54S) subunit. The 37S small subunit contains a 16S ribosomal RNA (16S mt-rRNA) and 32 different proteins. The 54S large subunit contains a 23S rRNA (23S mt-rRNA) and 42 different proteins.

It localises to the mitochondrion. In terms of biological role, component of the mitochondrial ribosome (mitoribosome), a dedicated translation machinery responsible for the synthesis of mitochondrial genome-encoded proteins, including at least some of the essential transmembrane subunits of the mitochondrial respiratory chain. The mitoribosomes are attached to the mitochondrial inner membrane and translation products are cotranslationally integrated into the membrane. In Neurospora crassa (strain ATCC 24698 / 74-OR23-1A / CBS 708.71 / DSM 1257 / FGSC 987), this protein is Small ribosomal subunit protein uS13m (sws2).